The following is a 284-amino-acid chain: Urease accessory protein UreD (284 aa).

The tract at residues 1 to 28 (MQSEQQAIGASGCEDAQQPVRQQRARGR) is disordered.

It belongs to the UreD family. As to quaternary structure, ureD, UreF and UreG form a complex that acts as a GTP-hydrolysis-dependent molecular chaperone, activating the urease apoprotein by helping to assemble the nickel containing metallocenter of UreC. The UreE protein probably delivers the nickel.

It is found in the cytoplasm. In terms of biological role, required for maturation of urease via the functional incorporation of the urease nickel metallocenter. This Agrobacterium fabrum (strain C58 / ATCC 33970) (Agrobacterium tumefaciens (strain C58)) protein is Urease accessory protein UreD.